The primary structure comprises 350 residues: Hydroxymethylglutaryl-CoA synthase (350 aa).

Glutamate 83 serves as the catalytic Proton donor/acceptor. Residue cysteine 115 is the Acyl-thioester intermediate of the active site. (3S)-3-hydroxy-3-methylglutaryl-CoA is bound by residues cysteine 115 and threonine 156. CoA is bound at residue arginine 204. Residues threonine 206 and histidine 239 each contribute to the (3S)-3-hydroxy-3-methylglutaryl-CoA site. The active-site Proton donor/acceptor is histidine 239. Lysine 244 provides a ligand contact to CoA. Residues asparagine 271 and serine 301 each contribute to the (3S)-3-hydroxy-3-methylglutaryl-CoA site.

This sequence belongs to the thiolase-like superfamily. Archaeal HMG-CoA synthase family. Interacts with acetoacetyl-CoA thiolase that catalyzes the precedent step in the pathway and with a DUF35 protein. The acetoacetyl-CoA thiolase/HMG-CoA synthase complex channels the intermediate via a fused CoA-binding site, which allows for efficient coupling of the endergonic thiolase reaction with the exergonic HMGCS reaction.

It carries out the reaction acetoacetyl-CoA + acetyl-CoA + H2O = (3S)-3-hydroxy-3-methylglutaryl-CoA + CoA + H(+). It participates in metabolic intermediate biosynthesis; (R)-mevalonate biosynthesis; (R)-mevalonate from acetyl-CoA: step 2/3. Functionally, catalyzes the condensation of acetyl-CoA with acetoacetyl-CoA to form 3-hydroxy-3-methylglutaryl-CoA (HMG-CoA). Functions in the mevalonate (MVA) pathway leading to isopentenyl diphosphate (IPP), a key precursor for the biosynthesis of isoprenoid compounds that are building blocks of archaeal membrane lipids. This is Hydroxymethylglutaryl-CoA synthase from Thermococcus kodakarensis (strain ATCC BAA-918 / JCM 12380 / KOD1) (Pyrococcus kodakaraensis (strain KOD1)).